A 706-amino-acid chain; its full sequence is Probable rhamnogalacturonate lyase B (706 aa).

Positions 1–19 are cleaved as a signal peptide; the sequence is MRLLHPLIPASLLLTLTSA. Residues Asn-27, Asn-40, Asn-143, Asn-239, Asn-285, Asn-380, Asn-495, Asn-569, Asn-597, and Asn-638 are each glycosylated (N-linked (GlcNAc...) asparagine).

Belongs to the polysaccharide lyase 4 family.

The protein resides in the secreted. It catalyses the reaction Endotype eliminative cleavage of L-alpha-rhamnopyranosyl-(1-&gt;4)-alpha-D-galactopyranosyluronic acid bonds of rhamnogalacturonan I domains in ramified hairy regions of pectin leaving L-rhamnopyranose at the reducing end and 4-deoxy-4,5-unsaturated D-galactopyranosyluronic acid at the non-reducing end.. Pectinolytic enzymes consist of four classes of enzymes: pectin lyase, polygalacturonase, pectin methylesterase and rhamnogalacturonase. Degrades the rhamnogalacturonan I (RG-I) backbone of pectin. This Aspergillus niger (strain ATCC MYA-4892 / CBS 513.88 / FGSC A1513) protein is Probable rhamnogalacturonate lyase B (rglB).